Consider the following 261-residue polypeptide: Eukaryotic translation initiation factor 3 subunit J-A (261 aa).

The span at 1–11 (MAAAAAAAAAA) shows a compositional bias: low complexity. Positions 1–113 (MAAAAAAAAA…EPEESKVLTP (113 aa)) are disordered. The tract at residues 4-72 (AAAAAAAAGD…KEEAEVKPEV (69 aa)) is sufficient for interaction with EIF3B. Ser-14, Ser-16, and Ser-23 each carry phosphoserine. The segment covering 43–64 (EGEDEDEDVKDNWDDDDDENKE) has biased composition (acidic residues). Basic and acidic residues predominate over residues 65-109 (EAEVKPEVKISEKKKIAEKIKEKERQQKKRQEEIKKRLEEPEESK). Residues 73–138 (KISEKKKIAE…ESDLELAKET (66 aa)) adopt a coiled-coil conformation. A Glycyl lysine isopeptide (Lys-Gly) (interchain with G-Cter in SUMO2) cross-link involves residue Lys-109. Residue Thr-112 is modified to Phosphothreonine. Ser-130 carries the phosphoserine modification. The tract at residues 246-261 (YGGYEGGYVQDYEDFM) is promotes stable association with the 40S ribosome. Residue Tyr-257 is modified to Phosphotyrosine.

It belongs to the eIF-3 subunit J family. Component of the eukaryotic translation initiation factor 3 (eIF-3) complex, which is composed of 13 subunits: EIF3A, EIF3B, EIF3C, EIF3D, EIF3E, EIF3F, EIF3G, EIF3H, EIF3I, EIF3J, EIF3K, EIF3L and EIF3M. The eIF-3 complex appears to include 3 stable modules: module A is composed of EIF3A, EIF3B, EIF3G and EIF3I; module B is composed of EIF3F, EIF3H, and EIF3M; and module C is composed of EIF3C, EIF3D, EIF3E, EIF3K and EIF3L. EIF3C of module C binds EIF3B of module A and EIF3H of module B, thereby linking the three modules. EIF3J is a labile subunit that binds to the eIF-3 complex via EIF3B. The eIF-3 complex interacts with RPS6KB1 under conditions of nutrient depletion. Mitogenic stimulation leads to binding and activation of a complex composed of MTOR and RPTOR, leading to phosphorylation and release of RPS6KB1 and binding of EIF4B to eIF-3. Phosphorylated. Phosphorylation is enhanced upon serum stimulation.

The protein resides in the cytoplasm. Functionally, component of the eukaryotic translation initiation factor 3 (eIF-3) complex, which is required for several steps in the initiation of protein synthesis. The eIF-3 complex associates with the 40S ribosome and facilitates the recruitment of eIF-1, eIF-1A, eIF-2:GTP:methionyl-tRNAi and eIF-5 to form the 43S pre-initiation complex (43S PIC). The eIF-3 complex stimulates mRNA recruitment to the 43S PIC and scanning of the mRNA for AUG recognition. The eIF-3 complex is also required for disassembly and recycling of post-termination ribosomal complexes and subsequently prevents premature joining of the 40S and 60S ribosomal subunits prior to initiation. The eIF-3 complex specifically targets and initiates translation of a subset of mRNAs involved in cell proliferation, including cell cycling, differentiation and apoptosis, and uses different modes of RNA stem-loop binding to exert either translational activation or repression. This subunit binds directly within the mRNA entry channel of the 40S ribosome to the aminoacyl (A) site. It may regulate the interaction between the 43S PIC and mRNA. This Mus musculus (Mouse) protein is Eukaryotic translation initiation factor 3 subunit J-A (Eif3j1).